Reading from the N-terminus, the 77-residue chain is Sec-independent protein translocase protein TatA (77 aa).

A helical transmembrane segment spans residues 2 to 22; sequence GFGGISIWQLLIILLIVVMLF. 2 stretches are compositionally biased toward basic and acidic residues: residues 46-59 and 66-77; these read DNGE…EEPK and QARKVEEPAKKD. The interval 46–77 is disordered; it reads DNGEAEKPAVEEPKGQTIDAQARKVEEPAKKD.

The protein belongs to the TatA/E family. As to quaternary structure, the Tat system comprises two distinct complexes: a TatABC complex, containing multiple copies of TatA, TatB and TatC subunits, and a separate TatA complex, containing only TatA subunits. Substrates initially bind to the TatABC complex, which probably triggers association of the separate TatA complex to form the active translocon.

Its subcellular location is the cell inner membrane. In terms of biological role, part of the twin-arginine translocation (Tat) system that transports large folded proteins containing a characteristic twin-arginine motif in their signal peptide across membranes. TatA could form the protein-conducting channel of the Tat system. This is Sec-independent protein translocase protein TatA from Ectopseudomonas mendocina (strain ymp) (Pseudomonas mendocina).